A 261-amino-acid chain; its full sequence is MAPSIATVKIARDMVLPLRIFVNRKQILQTNDKTSNKSNATIFEAPLLSNNSIICLKSPNTRIYLSQQDKKNLCDEIKEDLLLIVYELASPEIISSVLSKIRVGHSTDFQINVLPKLFAGADTDNAVTSHIQSVTRLAKFKYKLHYKHKWELDIFINSIKKIANLRHYLMFQTLTLNGFSLNAGPKTLLARKIEKQPQVPNLLIENGDADALDTPVEEDIKPVIEFMYKPVINLGEIIDVHVLHRPRRHKVRTQSKQPQEE.

In terms of assembly, interacts with MSH2, MSH3, RAD1, RAD10, RAD51 and RAD52.

The protein resides in the nucleus. Functionally, catalyzes 3'-non-homologous tail removal of RAD1/RAD10-dependent single-strand annealing recombination intermediates. Plays a key role in targeting RAD1/RAD10 complex to 3'-flap cleavage substrate in recombination. Also contributes to the integrity of ribosomal DNA arrays. The chain is Single-strand annealing weakened protein 1 (SAW1) from Saccharomyces cerevisiae (strain ATCC 204508 / S288c) (Baker's yeast).